Consider the following 284-residue polypeptide: Bifunctional protein FolD (284 aa).

Residues 164 to 166 (GRG), Ser-189, and Ile-230 contribute to the NADP(+) site.

This sequence belongs to the tetrahydrofolate dehydrogenase/cyclohydrolase family. Homodimer.

It carries out the reaction (6R)-5,10-methylene-5,6,7,8-tetrahydrofolate + NADP(+) = (6R)-5,10-methenyltetrahydrofolate + NADPH. The catalysed reaction is (6R)-5,10-methenyltetrahydrofolate + H2O = (6R)-10-formyltetrahydrofolate + H(+). It functions in the pathway one-carbon metabolism; tetrahydrofolate interconversion. Its function is as follows. Catalyzes the oxidation of 5,10-methylenetetrahydrofolate to 5,10-methenyltetrahydrofolate and then the hydrolysis of 5,10-methenyltetrahydrofolate to 10-formyltetrahydrofolate. This Desulforamulus reducens (strain ATCC BAA-1160 / DSM 100696 / MI-1) (Desulfotomaculum reducens) protein is Bifunctional protein FolD.